Reading from the N-terminus, the 304-residue chain is PTB domain-containing engulfment adapter protein 1 (304 aa).

The residue at position 16 (threonine 16) is a Phosphothreonine. The 156-residue stretch at 21–176 (SKHFIPYNAK…AGLQKRIQDL (156 aa)) folds into the PID domain. A coiled-coil region spans residues 158 to 202 (KDVETRKQIAGLQKRIQDLETENMELKNKVQDLENQLRITQVSAP). Serine 223 carries the phosphoserine modification. The tract at residues 223 to 246 (SPISHQSSMPTRNGTQPPPVPSRS) is disordered. Over residues 225–237 (ISHQSSMPTRNGT) the composition is skewed to polar residues.

It belongs to the ced-6 family. In terms of assembly, homodimer. Interacts with clathrin. Interacts with GDP-bound ARF6, but not with GTP-bound ARF6. Part of a complex composed of GULP1, ACAP1 and ARF6. Interacts with ACAP1, LRP1, MEGF10 and STAB2. As to expression, widely expressed. Detected in macrophages, pancreas, kidney, skeletal muscle, heart, colon, intestine, lung, placenta and ovary.

The protein resides in the cytoplasm. Functionally, may function as an adapter protein. Required for efficient phagocytosis of apoptotic cells. Modulates cellular glycosphingolipid and cholesterol transport. May play a role in the internalization and endosomal trafficking of various LRP1 ligands, such as PSAP. Increases cellular levels of GTP-bound ARF6. This chain is PTB domain-containing engulfment adapter protein 1 (GULP1), found in Homo sapiens (Human).